Here is a 201-residue protein sequence, read N- to C-terminus: Twin horsetail protein 2 (201 aa).

The protein resides in the nucleus. In terms of biological role, required for correct meiotic chromosome segregation and recombination. This Schizosaccharomyces pombe (strain 972 / ATCC 24843) (Fission yeast) protein is Twin horsetail protein 2 (tht2).